The primary structure comprises 363 residues: Teichoic acids export ATP-binding protein TagH (363 aa).

In terms of domain architecture, ABC transporter spans 27 to 246 (KHFFNIGNVD…YRKFSKDFKA (220 aa)). 60–67 (GINGSGKS) serves as a coordination point for ATP. The unknown stretch occupies residues 247 to 363 (QTAAYRKKYQ…KSQSVLFNSK (117 aa)).

It belongs to the ABC transporter superfamily. Teichoic acids exporter (TC 3.A.1.104.1) family. As to quaternary structure, the complex is composed of two ATP-binding proteins (TagH) and two transmembrane proteins (TagG).

The protein resides in the cell membrane. The enzyme catalyses ATP + H2O + teichoic acidSide 1 = ADP + phosphate + teichoic acidSide 2.. Its function is as follows. Part of the ABC transporter complex TagGH involved in teichoic acids export. Responsible for energy coupling to the transport system. The protein is Teichoic acids export ATP-binding protein TagH of Lactiplantibacillus plantarum (strain ATCC BAA-793 / NCIMB 8826 / WCFS1) (Lactobacillus plantarum).